The chain runs to 298 residues: tRNA uridine(34) hydroxylase (298 aa).

The region spanning 123-217 (QNPDVTLVDT…YLEEIPVAES (95 aa)) is the Rhodanese domain. C177 (cysteine persulfide intermediate) is an active-site residue.

It belongs to the TrhO family.

The catalysed reaction is uridine(34) in tRNA + AH2 + O2 = 5-hydroxyuridine(34) in tRNA + A + H2O. In terms of biological role, catalyzes oxygen-dependent 5-hydroxyuridine (ho5U) modification at position 34 in tRNAs. In Picosynechococcus sp. (strain ATCC 27264 / PCC 7002 / PR-6) (Agmenellum quadruplicatum), this protein is tRNA uridine(34) hydroxylase.